The chain runs to 69 residues: Mu-conotoxin-like Am3.1 (69 aa).

A signal peptide spans 1–20 (MMSKLRVLLIICLLLFPLTA). Residues 21-52 (VPLDGDQPADRPAERTQDDISSEHHPMFDAVR) constitute a propeptide that is removed on maturation. The segment at 22–43 (PLDGDQPADRPAERTQDDISSE) is disordered. Over residues 28-43 (PADRPAERTQDDISSE) the composition is skewed to basic and acidic residues. P66 carries the post-translational modification 4-hydroxyproline; partial; in minor form. Position 68 is a cysteine amide (C68).

The protein belongs to the conotoxin M family. In terms of processing, mostly non-hydroxylated. Contains 3 disulfide bonds. As to expression, expressed by the venom duct.

It is found in the secreted. In terms of biological role, mu-conotoxins block voltage-gated sodium channels (Nav). This Conus amadis (Amadis cone) protein is Mu-conotoxin-like Am3.1.